We begin with the raw amino-acid sequence, 930 residues long: Translation initiation factor IF-2 (930 aa).

The segment at 31–317 (FVKSASSTVE…RKSKRAKRAE (287 aa)) is disordered. Over residues 61-78 (PAAGASNGAPAKPSAPGA) the composition is skewed to low complexity. Composition is skewed to pro residues over residues 79–99 (RPGP…PAPA) and 108–120 (PAAP…PPAP). Low complexity predominate over residues 121-135 (AASAAPPSAPEAPSA). 2 stretches are compositionally biased toward pro residues: residues 136 to 158 (RPTP…PAPR) and 178 to 192 (PRPQ…PRPG). The span at 193–205 (PGAGGPRPGGGPR) shows a compositional bias: gly residues. The span at 212–242 (NMPPRPVGGPRPGGGPRPGGGPRPGAGPRPT) shows a compositional bias: pro residues. Over residues 244–301 (GGAGRPGGGGGGNYRGGGAGGGGGAGGAAAGGFRGRPGGGGGRPGQRGGAAGAFGRPG) the composition is skewed to gly residues. A compositionally biased stretch (basic residues) spans 305–314 (KRGRKSKRAK). The region spanning 426–598 (FRPPVVTVMG…VVLTADASLD (173 aa)) is the tr-type G domain. The segment at 435-442 (GHVDHGKT) is G1. 435–442 (GHVDHGKT) is a GTP binding site. A G2 region spans residues 460–464 (GITQH). The segment at 485-488 (DTPG) is G3. GTP contacts are provided by residues 485–489 (DTPGH) and 539–542 (NKID). Residues 539-542 (NKID) form a G4 region. Residues 575–577 (SAK) form a G5 region.

It belongs to the TRAFAC class translation factor GTPase superfamily. Classic translation factor GTPase family. IF-2 subfamily.

It localises to the cytoplasm. In terms of biological role, one of the essential components for the initiation of protein synthesis. Protects formylmethionyl-tRNA from spontaneous hydrolysis and promotes its binding to the 30S ribosomal subunits. Also involved in the hydrolysis of GTP during the formation of the 70S ribosomal complex. The chain is Translation initiation factor IF-2 from Mycolicibacterium gilvum (strain PYR-GCK) (Mycobacterium gilvum (strain PYR-GCK)).